Reading from the N-terminus, the 178-residue chain is MVSVPTTWCSVALALLVALHEGKGQAAATLEQPASSSHAQGTHLRLRRCSCSSWLDKECVYFCHLDIIWVNTPEQTAPYGLGNPPRRRRRSLPRRCQCSSARDPACATFCLRRPWTEAGAVPSRKSPADVFQTGKTGATTGELLQRLRDISTVKSLFAKRQQEAMREPRSTHSRWRKR.

Positions 1–24 (MVSVPTTWCSVALALLVALHEGKG) are cleaved as a signal peptide. Positions 25–46 (QAAATLEQPASSSHAQGTHLRL) are excised as a propeptide. Disulfide bonds link Cys-49–Cys-63 and Cys-51–Cys-59. A propeptide spanning residues 70–178 (VNTPEQTAPY…RSTHSRWRKR (109 aa)) is cleaved from the precursor. Residues 96–111 (CQCSSARDPACATFCL) are endothelin-like. The segment at 159 to 178 (KRQQEAMREPRSTHSRWRKR) is disordered. A compositionally biased stretch (basic and acidic residues) spans 160–170 (RQQEAMREPRS).

The protein belongs to the endothelin/sarafotoxin family. Expressed in lung, but not in placental stem villi vessels or cultured placental villi smooth muscle cells.

The protein resides in the secreted. Endothelins are endothelium-derived vasoconstrictor peptides. This chain is Endothelin-2 (EDN2), found in Homo sapiens (Human).